We begin with the raw amino-acid sequence, 300 residues long: tRNA pseudouridine synthase B (300 aa).

D38 (nucleophile) is an active-site residue.

The protein belongs to the pseudouridine synthase TruB family. Type 1 subfamily.

It catalyses the reaction uridine(55) in tRNA = pseudouridine(55) in tRNA. Responsible for synthesis of pseudouridine from uracil-55 in the psi GC loop of transfer RNAs. The sequence is that of tRNA pseudouridine synthase B from Dehalococcoides mccartyi (strain CBDB1).